The following is a 501-amino-acid chain: L-arabinose isomerase (501 aa).

The Mn(2+) site is built by E306, E333, H350, and H450.

This sequence belongs to the arabinose isomerase family. In terms of assembly, homohexamer. Requires Mn(2+) as cofactor.

It catalyses the reaction beta-L-arabinopyranose = L-ribulose. It participates in carbohydrate degradation; L-arabinose degradation via L-ribulose; D-xylulose 5-phosphate from L-arabinose (bacterial route): step 1/3. Its function is as follows. Catalyzes the conversion of L-arabinose to L-ribulose. The polypeptide is L-arabinose isomerase (Erwinia tasmaniensis (strain DSM 17950 / CFBP 7177 / CIP 109463 / NCPPB 4357 / Et1/99)).